Reading from the N-terminus, the 521-residue chain is MADPISEPLLSHLTDDSGVNEKTRLEALTFDKIVEQSLSDFGFWQFFQISLVGLALLFDAQQIFITVYTDAYPTWHCLNHTICDPSASDICKLPRSAWEWDGGSQGKSVISEFGLECSSSLLRGMPSSAFYIGAIVGGFFLALIPDDSLGRKKLVLFSTFAMSITSISVIFSTNVWIYTFLKFIIGFSRSQTWSYALVLISERVSTRWRPRATMIPFTLFVLGFMSLSGIAFLAQDSSWRYLYLYTSVPAVFYCIFLYLFALESPRWLHMQGKDKEAIDVLTKMSPKEKAYLESVVSKLPLKQENFEQAPTYSIKDFFFRKWAFRRILVVMIIMFGLGISYYGVPLAARDIDVNIYLSETLNALVELPTFVITPILLERFNRRSSVLVNTLLGGASGVLCFVLSILGKTEIAFAFELGTFFCARIGFNLMAVFMVEMFPTCVRSSATMMFRQALVVGGACCPLIASIGRYIPSVSFAIFGIAMSGLGMFVLILPETKGLSLCDSMEEQEKRDQAVNTSHVC.

At M1–S37 the chain is on the cytoplasmic side. The helical transmembrane segment at L38–F58 threads the bilayer. The Extracellular portion of the chain corresponds to D59–R123. An N-linked (GlcNAc...) asparagine glycan is attached at N79. Residues G124–I144 form a helical membrane-spanning segment. Topologically, residues P145–L154 are cytoplasmic. The chain crosses the membrane as a helical span at residues V155–I177. The Extracellular portion of the chain corresponds to Y178 to K182. The helical transmembrane segment at F183–I200 threads the bilayer. I200–R207 provides a ligand contact to ATP. Residues S201 to T213 lie on the Cytoplasmic side of the membrane. The helical transmembrane segment at M214–A234 threads the bilayer. The Extracellular segment spans residues Q235 to Y241. A helical membrane pass occupies residues L242 to L262. The Cytoplasmic portion of the chain corresponds to E263 to R326. Residues I327–A347 form a helical membrane-spanning segment. At A348–Y356 the chain is on the extracellular side. The chain crosses the membrane as a helical span at residues L357–L377. The Cytoplasmic portion of the chain corresponds to E378–S385. Residues V386–L406 form a helical membrane-spanning segment. Topologically, residues G407 to A412 are extracellular. The chain crosses the membrane as a helical span at residues F413–F433. Residues M434–T447 are Cytoplasmic-facing. A helical transmembrane segment spans residues M448–G468. Over R469–S473 the chain is Extracellular. A helical transmembrane segment spans residues V474 to P494. At E495–C521 the chain is on the cytoplasmic side.

It belongs to the major facilitator (TC 2.A.1) superfamily. Organic cation transporter (TC 2.A.1.19) family. In terms of tissue distribution, expressed in roots and stems. In the stem of secondary inflorescences, localized to the phloem. Also present in flowers, specifically in the stamen, in the filaments and the connective, and restricted to major veins in leaves.

The protein localises to the vacuole membrane. In terms of biological role, high affinity carnitine transporter involved in the active cellular uptake of carnitine. Also transports organic cations. The protein is Organic cation/carnitine transporter 6 (OCT6) of Arabidopsis thaliana (Mouse-ear cress).